The primary structure comprises 351 residues: Protein FAM118B (351 aa).

An N-acetylalanine modification is found at alanine 2. Residue serine 9 is modified to Phosphoserine.

The protein belongs to the FAM118 family.

It is found in the nucleus. Its subcellular location is the cajal body. In terms of biological role, may play a role in Cajal bodies formation. The chain is Protein FAM118B (FAM118B) from Bos taurus (Bovine).